The chain runs to 633 residues: Chaperone protein dnaK2 (633 aa).

Thr196 is modified (phosphothreonine; by autocatalysis). The disordered stretch occupies residues 600–633 (ATADGGPAQHAATGGPTSGGGGGDDVIDAEFDKG). Residues 624–633 (DVIDAEFDKG) are compositionally biased toward acidic residues.

It belongs to the heat shock protein 70 family.

Functionally, acts as a chaperone. This is Chaperone protein dnaK2 (dnaK2) from Streptomyces avermitilis (strain ATCC 31267 / DSM 46492 / JCM 5070 / NBRC 14893 / NCIMB 12804 / NRRL 8165 / MA-4680).